We begin with the raw amino-acid sequence, 326 residues long: Putative cell agglutination protein pfl9 (326 aa).

The N-terminal stretch at 1-21 is a signal peptide; sequence MNVVKYIIFSFALAPLLLVNA. N-linked (GlcNAc...) asparagine glycosylation is present at asparagine 25. Repeat copies occupy residues 103 to 137 and 138 to 175. The segment at 103-175 is 2 X 36 AA approximate tandem repeats; it reads STITTTITSG…GEVEVITPSC (73 aa). The DIPSY domain maps to 164-326; that stretch reads QSGEVEVITP…RANDVTLQLY (163 aa).

This sequence belongs to the mam3/map4 family.

The protein localises to the cell surface. In terms of biological role, may be involved in agglutination during conjugation or other aspects of colony formation. Induces flocculation when overexpressed. In Schizosaccharomyces pombe (strain 972 / ATCC 24843) (Fission yeast), this protein is Putative cell agglutination protein pfl9.